Consider the following 318-residue polypeptide: Aldo-keto reductase family 1 member C21 (318 aa).

20-24 (GFGTA) lines the NADP(+) pocket. Lys31 contacts substrate. Asp50 contributes to the NADP(+) binding site. Tyr55 functions as the Proton donor in the catalytic mechanism. Position 117 (His117) interacts with substrate. NADP(+) is bound by residues 166–167 (SN), Gln190, 216–224 (YGVLGTQRY), and 270–280 (TSLKEERIKEN).

Belongs to the aldo/keto reductase family. As to quaternary structure, monomer.

It localises to the cytoplasm. It catalyses the reaction androsterone + NADP(+) = 5alpha-androstan-3,17-dione + NADPH + H(+). The enzyme catalyses androsterone + NAD(+) = 5alpha-androstan-3,17-dione + NADH + H(+). Its function is as follows. NADP-dependent 17-alpha-hydroxysteroid dehydrogenase that converts 5-alpha-androstane-3,17-dione into androsterone. Has lower 3-alpha-hydroxysteroid dehydrogenase activity. Has broad substrate specificity and acts on various 17-alpha-hydroxysteroids, 17-ketosteroids, 3-alpha hydroxysteroids and 3-ketosteroids. Reduction of keto groups is strictly stereoselective. Reduction of 17-ketosteroids yields only 17-alpha-hydroxysteroids. Likewise, reduction of 3-ketosteroids yields only 3-alpha-hydroxysteroids. The polypeptide is Aldo-keto reductase family 1 member C21 (Akr1c21) (Rattus norvegicus (Rat)).